A 146-amino-acid chain; its full sequence is D-aminoacyl-tRNA deacylase (146 aa).

The short motif at glycine 137 to proline 138 is the Gly-cisPro motif, important for rejection of L-amino acids element.

It belongs to the DTD family. Homodimer.

The protein resides in the cytoplasm. It catalyses the reaction glycyl-tRNA(Ala) + H2O = tRNA(Ala) + glycine + H(+). It carries out the reaction a D-aminoacyl-tRNA + H2O = a tRNA + a D-alpha-amino acid + H(+). An aminoacyl-tRNA editing enzyme that deacylates mischarged D-aminoacyl-tRNAs. Also deacylates mischarged glycyl-tRNA(Ala), protecting cells against glycine mischarging by AlaRS. Acts via tRNA-based rather than protein-based catalysis; rejects L-amino acids rather than detecting D-amino acids in the active site. By recycling D-aminoacyl-tRNA to D-amino acids and free tRNA molecules, this enzyme counteracts the toxicity associated with the formation of D-aminoacyl-tRNA entities in vivo and helps enforce protein L-homochirality. The protein is D-aminoacyl-tRNA deacylase of Halalkalibacterium halodurans (strain ATCC BAA-125 / DSM 18197 / FERM 7344 / JCM 9153 / C-125) (Bacillus halodurans).